The sequence spans 831 residues: Prolactin receptor (831 aa).

A signal peptide spans 1–23 (MKQDLISSVQIILFLPLTTVGLA). The Extracellular segment spans residues 24–438 (GQSFPGKPKI…QIPNDFRVKD (415 aa)). Fibronectin type-III domains follow at residues 30–128 (KPKI…VQPG), 129–227 (SPVN…IPSG), 230–331 (PPEK…VQPD), and 332–433 (PPVN…IPND). An intrachain disulfide couples Cys-36 to Cys-46. A glycan (N-linked (GlcNAc...) asparagine) is linked at Asn-59. A disulfide bridge connects residues Cys-75 and Cys-86. Asn-91, Asn-100, Asn-112, Asn-132, Asn-262, Asn-303, Asn-315, and Asn-335 each carry an N-linked (GlcNAc...) asparagine glycan. Residues Asp-414 and His-416 each coordinate Zn(2+). A WSXWS motif motif is present at residues 419–423 (WSEWS). The chain crosses the membrane as a helical span at residues 439–459 (MIVWIVLGVLSSLICLIMSWT). Over 460-831 (MVLKGYRMIT…DPSSFMPSFK (372 aa)) the chain is Cytoplasmic. A Box 1 motif motif is present at residues 471 to 479 (MLPPVPGPK). 3 disordered regions span residues 527 to 563 (QQLMPSHDNGHPSKNAKITRKETDSDSGRGSCDSPSL), 774 to 796 (RVPHTPASQEPAKETSQSLQQGQ), and 808 to 831 (PSDCKRETGGSEYMDPSSFMPSFK). Residues 787 to 796 (ETSQSLQQGQ) are compositionally biased toward polar residues.

The protein belongs to the type I cytokine receptor family. Type 1 subfamily.

The protein resides in the membrane. This is a receptor for the anterior pituitary hormone prolactin. The protein is Prolactin receptor (PRLR) of Gallus gallus (Chicken).